A 187-amino-acid polypeptide reads, in one-letter code: Resolvase OPG149 (187 aa).

The protein belongs to the RuvC family. Poxviruses-type subfamily. It depends on Mg(2+) as a cofactor.

Plays a role in DNA replication by cleaving viral DNA concatamers to yield unit-length viral genomes. The concatamer junctions contain inverted repeat sequences that can be extruded as cruciforms, yielding Holliday junctions that A22 protein cleaves. The chain is Resolvase OPG149 (OPG149) from Variola virus (isolate Human/India/Ind3/1967) (VARV).